The following is a 615-amino-acid chain: Elongation factor 4 (615 aa).

A tr-type G domain is found at alanine 17–valine 198. GTP-binding positions include aspartate 29–threonine 34 and asparagine 145–aspartate 148.

Belongs to the TRAFAC class translation factor GTPase superfamily. Classic translation factor GTPase family. LepA subfamily.

The protein resides in the cell membrane. The catalysed reaction is GTP + H2O = GDP + phosphate + H(+). Functionally, required for accurate and efficient protein synthesis under certain stress conditions. May act as a fidelity factor of the translation reaction, by catalyzing a one-codon backward translocation of tRNAs on improperly translocated ribosomes. Back-translocation proceeds from a post-translocation (POST) complex to a pre-translocation (PRE) complex, thus giving elongation factor G a second chance to translocate the tRNAs correctly. Binds to ribosomes in a GTP-dependent manner. This is Elongation factor 4 from Clavibacter sepedonicus (Clavibacter michiganensis subsp. sepedonicus).